The following is a 327-amino-acid chain: MVVELKNIEKIYENGFHALKGVNLELKKGDILGVIGYSGAGKSTLIRLINCLERPSSGEVLVNGVNLLNLKPKELQKARQKIGMIFQHFNLLSAKNVFENVAFALEIARWEKTKIKSRVHELLELVGLEDKVHFYPKQLSGGQKQRVAIARSLANCPNLLLCDEATSALDSKTTHSILTLLSGIQKKFDLSIVFITHQIEVVKELCNQMCVISSGEIVERGSVEEIFANPKHAVTKELLGIKNEHADQKSQDIYRIVFLGEHLDEPIISNLIRRFKIDVSIISGNIEELTTKDIGYLVVRFLGSVAEIQRALEYLNALGLQVEKLKD.

The ABC transporter domain occupies 3–239 (VELKNIEKIY…PKHAVTKELL (237 aa)). 36–43 (GYSGAGKS) lines the ATP pocket.

It belongs to the ABC transporter superfamily. Methionine importer (TC 3.A.1.24) family. The complex is composed of two ATP-binding proteins (MetN), two transmembrane proteins (MetI) and a solute-binding protein (MetQ).

It localises to the cell inner membrane. The catalysed reaction is L-methionine(out) + ATP + H2O = L-methionine(in) + ADP + phosphate + H(+). The enzyme catalyses D-methionine(out) + ATP + H2O = D-methionine(in) + ADP + phosphate + H(+). Its function is as follows. Part of the ABC transporter complex MetNIQ involved in methionine import. Responsible for energy coupling to the transport system. The chain is Methionine import ATP-binding protein MetN from Helicobacter pylori (strain J99 / ATCC 700824) (Campylobacter pylori J99).